Reading from the N-terminus, the 1118-residue chain is Cytospin-A (1118 aa).

Residues 1 to 176 (MKKASRSVGS…SKSKSDNQIS (176 aa)) form a disordered region. Residues 29–52 (ESGSSLSAVTKLSKPGTSASLLKT) show a composition bias toward polar residues. Low complexity predominate over residues 79 to 119 (STCASTVSSTTGTTMSTLENKPRTVAGSTARRSTSSGTKES). 2 stretches are compositionally biased toward basic and acidic residues: residues 120–131 (SSSRERIRDRSR) and 158–171 (TNPE…KSKS). Residues 193-281 (KTKDVEILHL…LNALGFSLEQ (89 aa)) are a coiled coil. Disordered stretches follow at residues 299 to 324 (ITAG…GSME) and 359 to 391 (SSDD…NASE). The span at 359–373 (SSDDALDAPSSSESE) shows a compositional bias: low complexity. Coiled coils occupy residues 396–450 (CLTE…MESL) and 488–808 (RYME…RGRV). Disordered regions lie at residues 856 to 879 (PSPA…PPAA) and 921 to 1002 (TSST…RKDP). Over residues 937–946 (ESAKSISVSR) the composition is skewed to low complexity. The segment covering 947-957 (RSSEEIKRDIS) has biased composition (basic and acidic residues). Positions 972 to 991 (TTSPQLSLSSSPTASVTPTT) are enriched in low complexity. One can recognise a Calponin-homology (CH) domain in the interval 1012–1117 (GSKRNALLKW…YVTAIYKYFE (106 aa)).

Belongs to the cytospin-A family. In terms of assembly, may interact with both microtubules and actin cytoskeleton.

It is found in the cytoplasm. Its subcellular location is the cytoskeleton. The protein resides in the spindle. It localises to the cell junction. The protein localises to the gap junction. Involved in cytokinesis and spindle organization. May play a role in actin cytoskeleton organization and microtubule stabilization and hence required for proper cell adhesion and migration. The protein is Cytospin-A (SPECC1L) of Gallus gallus (Chicken).